The primary structure comprises 126 residues: Precursor of CEP2 (126 aa).

The N-terminal stretch at 1–19 (MKLFIITVVTILTISRVFD) is a signal peptide. Residues 20–80 (KTPATTEARK…ENNLKNRFIN (61 aa)) constitute a propeptide that is removed on maturation. Residues P84 and P87 each carry the hydroxyproline modification. Residues 96–105 (PRVLNNKFTN) constitute a propeptide that is removed on maturation. Hydroxyproline is present on residues P109, P112, and P116. Positions 121–126 (PGVVNV) are excised as a propeptide.

The protein belongs to the C-terminally encoded plant signaling peptide (CEP) family. As to quaternary structure, interacts with CEP receptors (e.g. CEPR1 and CEPR2). Post-translationally, the mature small signaling peptide is generated by proteolytic processing of the longer precursor. Mostly expressed in roots. Present in cotyledons, shoot apical meristem (SAM), leaves, inflorescence stems and flowers.

The protein localises to the secreted. Its subcellular location is the extracellular space. It localises to the apoplast. Extracellular signaling peptide that represses primary root growth rate. Negatively regulates the number of leaves and flowering, and modulates leaf morphology. Regulates systemic nitrogen (N)-demand signaling. Mediates up-regulation of genes involved in N uptake and assimilation pathways. This Arabidopsis thaliana (Mouse-ear cress) protein is Precursor of CEP2.